We begin with the raw amino-acid sequence, 27 residues long: IPLRGAFINGRWDSQCHRFSNGAIACA.

Expressed by the skin glands.

The protein resides in the secreted. Amphibian peptide that shows viricidal activity against human H1N1 influenza A virus. It specifically targets the conserved stalk region of H1 hemagglutinin, and acts by actively destroying influenza virions. It shows a reduced activity on human H3N2 influenza A virus and no activity against other viruses (HIV, SIV, HSV-II, hepatitis C, Ebola, Zika, and Dengue viruses). In vivo, the peptide also protects mice infected with mouse-adapted influenza virus from lethal influenza infection. The peptide synthesized in D-amino acids is inactive. In Hydrophylax bahuvistara (Wide-spread fungoid frog), this protein is Urumin.